The sequence spans 169 residues: Myosin regulatory light chain 11 (169 aa).

The residue at position 2 (alanine 2) is a N,N,N-trimethylalanine. Residues serine 15 and serine 16 each carry the phosphoserine modification. Phosphothreonine is present on residues threonine 25 and threonine 35. In terms of domain architecture, EF-hand 1 spans 25 to 60; the sequence is TQIQEFKEAFTVIDQNRDGIIDKEDLRDTFAAMGRL. Aspartate 38, asparagine 40, aspartate 42, and aspartate 49 together coordinate Ca(2+). At serine 75 the chain carries Phosphoserine. 2 consecutive EF-hand domains span residues 95-130 and 131-166; these read DPED…QCDR and FSQE…GDAK. Threonine 101 bears the Phosphothreonine mark.

In terms of assembly, myosin is a hexamer of 2 heavy chains and 4 light chains.

Its function is as follows. Myosin regulatory subunit that plays an essential to maintain muscle integrity during early development. Plays a role in muscle contraction. The chain is Myosin regulatory light chain 11 (Myl11) from Rattus norvegicus (Rat).